A 147-amino-acid polypeptide reads, in one-letter code: Alpha-amylase/trypsin inhibitor (147 aa).

The N-terminal stretch at 1–21 is a signal peptide; the sequence is MASDHRRFVLSGAVLLSVLAV.

It belongs to the protease inhibitor I6 (cereal trypsin/alpha-amylase inhibitor) family. Post-translationally, five disulfide bonds, which are essential for the inhibitor activity, are probably present. In terms of tissue distribution, endosperm.

Its subcellular location is the secreted. In terms of biological role, alpha-amylase/trypsin inhibitor. The sequence is that of Alpha-amylase/trypsin inhibitor from Hordeum vulgare (Barley).